A 126-amino-acid chain; its full sequence is Nuclear transport factor 2B (126 aa).

Residue Ser2 is modified to N-acetylserine. Residues 9-123 (VSKAFVEHYY…FYVFNDIFRL (115 aa)) enclose the NTF2 domain.

As to quaternary structure, interacts with RAN1. In terms of tissue distribution, expressed in roots, stems, leaves and flowers, and, at low levels, in siliques.

It localises to the cytoplasm. The protein resides in the nucleus. It is found in the nucleus envelope. Functionally, facilitates protein transport into the nucleus. Interacts with various nucleoporins and with Ran-GDP. Could be part of a multicomponent system of cytosolic factors that assemble at the pore complex during nuclear import. The protein is Nuclear transport factor 2B of Arabidopsis thaliana (Mouse-ear cress).